Consider the following 164-residue polypeptide: MNIDNDLRRIALQEQQLQFERFDLDTAWKLGATLRRMAGERKLGCVIDITLYSMQVFYAALDGATPDNPNWVRRKRNTVFRLFKSSYATGLSLLKQQTNLQAKLGLPDAEFAAHGGSFPIVVKGTGCIGAVTVSGLPQREDHNLVVEALAELLGADHDALKLES.

It belongs to the UPF0303 family.

The sequence is that of UPF0303 protein R02983 from Rhizobium meliloti (strain 1021) (Ensifer meliloti).